A 285-amino-acid polypeptide reads, in one-letter code: Pyrroline-5-carboxylate reductase (285 aa).

This sequence belongs to the pyrroline-5-carboxylate reductase family. In terms of assembly, homotetramer.

It catalyses the reaction L-proline + NADP(+) = (S)-1-pyrroline-5-carboxylate + NADPH + 2 H(+). The catalysed reaction is L-proline + NAD(+) = (S)-1-pyrroline-5-carboxylate + NADH + 2 H(+). Its pathway is amino-acid biosynthesis; L-proline biosynthesis; L-proline from L-glutamate 5-semialdehyde: step 1/1. The polypeptide is Pyrroline-5-carboxylate reductase (Kluyveromyces lactis (strain ATCC 8585 / CBS 2359 / DSM 70799 / NBRC 1267 / NRRL Y-1140 / WM37) (Yeast)).